Reading from the N-terminus, the 338-residue chain is Ketol-acid reductoisomerase (NADP(+)) (338 aa).

The KARI N-terminal Rossmann domain maps to 1–181 (MKVFYDKDCD…GGGKAGIIET (181 aa)). NADP(+) contacts are provided by residues 24 to 27 (YGSQ), arginine 47, and serine 52. Residue histidine 107 is part of the active site. NADP(+) is bound at residue glycine 133. A KARI C-terminal knotted domain is found at 182–327 (NFREETETDL…EKLRAMMPWI (146 aa)). Residues aspartate 190, glutamate 194, glutamate 226, and glutamate 230 each coordinate Mg(2+). Serine 251 lines the substrate pocket.

The protein belongs to the ketol-acid reductoisomerase family. It depends on Mg(2+) as a cofactor.

It catalyses the reaction (2R)-2,3-dihydroxy-3-methylbutanoate + NADP(+) = (2S)-2-acetolactate + NADPH + H(+). The enzyme catalyses (2R,3R)-2,3-dihydroxy-3-methylpentanoate + NADP(+) = (S)-2-ethyl-2-hydroxy-3-oxobutanoate + NADPH + H(+). Its pathway is amino-acid biosynthesis; L-isoleucine biosynthesis; L-isoleucine from 2-oxobutanoate: step 2/4. It functions in the pathway amino-acid biosynthesis; L-valine biosynthesis; L-valine from pyruvate: step 2/4. Its function is as follows. Involved in the biosynthesis of branched-chain amino acids (BCAA). Catalyzes an alkyl-migration followed by a ketol-acid reduction of (S)-2-acetolactate (S2AL) to yield (R)-2,3-dihydroxy-isovalerate. In the isomerase reaction, S2AL is rearranged via a Mg-dependent methyl migration to produce 3-hydroxy-3-methyl-2-ketobutyrate (HMKB). In the reductase reaction, this 2-ketoacid undergoes a metal-dependent reduction by NADPH to yield (R)-2,3-dihydroxy-isovalerate. The sequence is that of Ketol-acid reductoisomerase (NADP(+)) from Polaromonas sp. (strain JS666 / ATCC BAA-500).